The chain runs to 234 residues: 2-amino-5-formylamino-6-ribosylaminopyrimidin-4(3H)-one 5'-monophosphate deformylase (234 aa).

Fe cation-binding residues include E30, H32, D41, and H111.

The protein belongs to the creatininase superfamily. FAPy deformylase family. In terms of assembly, homodimer. It depends on Fe(2+) as a cofactor. The cofactor is Zn(2+).

The enzyme catalyses 2-amino-5-formylamino-6-(5-phospho-D-ribosylamino)pyrimidin-4(3H)-one + H2O = 2,5-diamino-6-(1-D-ribosylamino)pyrimidin-4(3H)-one 5'-phosphate + formate + H(+). It participates in cofactor biosynthesis; coenzyme F420 biosynthesis. Its pathway is cofactor biosynthesis; riboflavin biosynthesis. Its function is as follows. Catalyzes the hydrolysis of the formamide of 2-amino-5-formylamino-6-ribosylamino-4(3H)-pyrimidinone 5'-monophosphate (FAPy) to form 2,5-diamino-6-ribosylamino-4(3H)-pyrimidinone 5'-phosphate (APy). In Methanothermobacter thermautotrophicus (strain ATCC 29096 / DSM 1053 / JCM 10044 / NBRC 100330 / Delta H) (Methanobacterium thermoautotrophicum), this protein is 2-amino-5-formylamino-6-ribosylaminopyrimidin-4(3H)-one 5'-monophosphate deformylase.